We begin with the raw amino-acid sequence, 94 residues long: Small ribosomal subunit protein uS19 (94 aa).

The protein belongs to the universal ribosomal protein uS19 family.

Functionally, protein S19 forms a complex with S13 that binds strongly to the 16S ribosomal RNA. In Carboxydothermus hydrogenoformans (strain ATCC BAA-161 / DSM 6008 / Z-2901), this protein is Small ribosomal subunit protein uS19.